A 543-amino-acid polypeptide reads, in one-letter code: Chaperonin GroEL 7 (543 aa).

ATP contacts are provided by residues 30 to 33 (TLGP), Lys51, 87 to 91 (DGTTT), Gly415, and Asp496.

It belongs to the chaperonin (HSP60) family. In terms of assembly, forms a cylinder of 14 subunits composed of two heptameric rings stacked back-to-back. Interacts with the co-chaperonin GroES.

Its subcellular location is the cytoplasm. The enzyme catalyses ATP + H2O + a folded polypeptide = ADP + phosphate + an unfolded polypeptide.. Together with its co-chaperonin GroES, plays an essential role in assisting protein folding. The GroEL-GroES system forms a nano-cage that allows encapsulation of the non-native substrate proteins and provides a physical environment optimized to promote and accelerate protein folding. This chain is Chaperonin GroEL 7, found in Bradyrhizobium diazoefficiens (strain JCM 10833 / BCRC 13528 / IAM 13628 / NBRC 14792 / USDA 110).